A 105-amino-acid chain; its full sequence is Circadian clock oscillator protein KaiB1 (105 aa).

Belongs to the KaiB family. As to quaternary structure, homotetramer in solution and crystals formed by 2 dimers. Only elutes as a homotetramer in size exclusion chromatography, interacts with KaiC1 and KaiC3. The KaiABC complex composition changes during the circadian cycle to control KaiC phosphorylation. Complexes KaiC(6), KaiA(2-4):KaiC(6), KaiB(6):KaiC(6) and KaiC(6):KaiB(6):KaiA(12) are among the most important forms, many form cooperatively. Undergoes a major conformational rearrangment; in the free state forms homotetramers as a dimer of dimers. When bound to the CI domain of KaiC switches to a monomeric thioredoxin-fold (KaiB(fs)). KaiB(fs) binds CikA, leading it to dephosphorylate phospho-RpaA.

In terms of biological role, key component of the KaiABC oscillator complex, which constitutes the main circadian regulator in cyanobacteria. Complex composition changes during the circadian cycle to control KaiC phosphorylation. KaiA stimulates KaiC autophosphorylation, while KaiB sequesters KaiA, leading to KaiC autodephosphorylation. Phospho-Ser-431 KaiC accumulation triggers binding of KaiB to form the KaiB(6):KaiC(6) complex, leading to changes in output regulators CikA and SasA. KaiB switches to a thioredoxin-like fold (KaiB(fs)) when bound to KaiC. KaiB(6):KaiC(6) formation exposes a site for KaiA binding that sequesters KaiA from KaiC, making the KaiC(6):KaiB(6):KaiA(12) complex that results in KaiC autodephosphorylation. Component of the oscillator and circadian clock in this organism, enhances fitness in a rhythmic environment. The homotetramer reduces the ATPase activity of KaiC3 by 35%. Its function is as follows. A metamorphic protein which reversibly switches between an inactive tetrameric fold and a rare, thioredoxin-like monomeric fold (KaiB(fs)). KaiB(fs) binds phospho-KaiC, KaiA and CikA. KaiA and CikA compete for binding to KaiB(fs), and KaiB(fs) and SasA compete for binding to KaiC, thus the clock oscillator and output signal pathway are tightly coupled. The chain is Circadian clock oscillator protein KaiB1 from Synechocystis sp. (strain ATCC 27184 / PCC 6803 / Kazusa).